Consider the following 592-residue polypeptide: Aspartate--tRNA ligase (592 aa).

E171 contributes to the L-aspartate binding site. The segment at Q195 to K198 is aspartate. R217 contacts L-aspartate. ATP is bound by residues R217–E219 and Q226. L-aspartate is bound at residue H448. E482 lines the ATP pocket. R489 is a binding site for L-aspartate. G534 to R537 lines the ATP pocket.

Belongs to the class-II aminoacyl-tRNA synthetase family. Type 1 subfamily. In terms of assembly, homodimer.

It is found in the cytoplasm. It catalyses the reaction tRNA(Asp) + L-aspartate + ATP = L-aspartyl-tRNA(Asp) + AMP + diphosphate. Catalyzes the attachment of L-aspartate to tRNA(Asp) in a two-step reaction: L-aspartate is first activated by ATP to form Asp-AMP and then transferred to the acceptor end of tRNA(Asp). The protein is Aspartate--tRNA ligase of Vibrio campbellii (strain ATCC BAA-1116).